The sequence spans 465 residues: MSRTVTNALGEPLSYGGSSTAWFSASGSGPLLYGTAGNDSMWADSSVDVTMIGDSGDDIYYLYSGVNRASEAPSAGVDTINTWMSYSLPENFENLTVTGVEGFGFGNSASNIISGGSGSQTINGGAGNDVLTGAGGADTFAFKRGNGSDLISDFGSDDVVRLEGYGFTSFDHILANVAQEGLDLKLSLADGEYLVFANTSADQLHANQFSLALDRSVLTQTFSDDFNTLQLSDGTSGVWDPKYWWAPEKGATLTGNDELQWYVNPTYQPTASANPFSVTDGVLTITAKPASQAIQAETNGYDYTSGMLTTYSSFAQTYGYFEMRADMPDDQGAWPAFWLLPGDGTWPPELDVVEMHGQDPNTVIATVHSNETGSQTSIASAARVTDTSGFHKYGVLWTEEEIVWYFDDAAIARADTPSDMHDPMYMLVNLAIGGMAGPPTDGLMGGAEMKVDYVKAYSLDADWHI.

Hemolysin-type calcium-binding repeat units follow at residues 33–50, 105–122, and 123–140; these read YGTA…VDVT, FGNS…SQTI, and NGGA…ADTF. Residues 213–462 form the GH16 domain; sequence LDRSVLTQTF…YVKAYSLDAD (250 aa). The Nucleophile role is filled by glutamate 349. Glutamate 354 (proton donor) is an active-site residue.

The protein belongs to the glycosyl hydrolase 16 family.

The protein localises to the secreted. It participates in glycan metabolism; exopolysaccharide biosynthesis. In terms of biological role, cleaves high molecular weight succinoglycan to yield LMW succinoglycan. Dynamically regulates the molecular weight distribution of succinoglycan by cleaving nascent succinoglycan only during a limited period after its synthesis, perhaps before it undergoes a time-dependent change in its conformation or aggregation state. The sequence is that of Endo-1,3-1,4-beta-glycanase EglC (eglC) from Rhizobium meliloti (strain 1021) (Ensifer meliloti).